Consider the following 83-residue polypeptide: Major outer membrane lipoprotein (83 aa).

The N-terminal stretch at 1–19 (MNNVLKFSALALAAVLATG) is a signal peptide. Cys20 carries N-palmitoyl cysteine lipidation. Cys20 carries the S-diacylglycerol cysteine lipid modification.

It is found in the cell outer membrane. The chain is Major outer membrane lipoprotein (oprI) from Pseudomonas aeruginosa (strain ATCC 15692 / DSM 22644 / CIP 104116 / JCM 14847 / LMG 12228 / 1C / PRS 101 / PAO1).